Reading from the N-terminus, the 466-residue chain is Citrate synthase, mitochondrial (466 aa).

The transit peptide at 1-27 (MALLTAAARLLGTKNASCLVLAARHAS) directs the protein to the mitochondrion. Positions 2-21 (ALLTAAARLLGTKNASCLVL) match the SIFI-degron motif. K57 carries the post-translational modification N6-succinyllysine. K76 is subject to N6-acetyllysine; alternate. N6-succinyllysine; alternate is present on K76. K103 and K193 each carry N6-succinyllysine. Residue H301 is part of the active site. N6-acetyllysine; alternate is present on residues K321 and K327. N6-succinyllysine; alternate occurs at positions 321 and 327. The active site involves H347. Residue R356 participates in oxaloacetate binding. An N6-acetyllysine; alternate modification is found at K375. K375 is modified (N6-succinyllysine; alternate). At K382 the chain carries N6-acetyllysine. At K393 the chain carries N6-acetyllysine; alternate. Residue K393 is modified to N6-succinyllysine; alternate. An N6,N6,N6-trimethyllysine modification is found at K395. The active site involves D402. The oxaloacetate site is built by R428 and R448. An N6-succinyllysine modification is found at K450. Position 459 is an N6-acetyllysine; alternate (K459). K459 is subject to N6-succinyllysine; alternate.

It belongs to the citrate synthase family. As to quaternary structure, homodimer. Post-translationally, methylated. Trimethylation at Lys-395 by CSKMT decreases citrate synthase activity. In terms of processing, in response to mitochondrial stress, the precursor protein is ubiquitinated by the SIFI complex in the cytoplasm before mitochondrial import, leading to its degradation. Within the SIFI complex, UBR4 initiates ubiquitin chain that are further elongated or branched by KCMF1.

The protein localises to the mitochondrion matrix. It catalyses the reaction oxaloacetate + acetyl-CoA + H2O = citrate + CoA + H(+). The protein operates within carbohydrate metabolism; tricarboxylic acid cycle; isocitrate from oxaloacetate: step 1/2. Functionally, key enzyme of the Krebs tricarboxylic acid cycle which catalyzes the synthesis of citrate from acetyl coenzyme A and oxaloacetate. The sequence is that of Citrate synthase, mitochondrial (CS) from Macaca fascicularis (Crab-eating macaque).